The following is a 241-amino-acid chain: Probable transcriptional regulatory protein Rmet_0785 (241 aa).

Belongs to the TACO1 family.

The protein localises to the cytoplasm. The polypeptide is Probable transcriptional regulatory protein Rmet_0785 (Cupriavidus metallidurans (strain ATCC 43123 / DSM 2839 / NBRC 102507 / CH34) (Ralstonia metallidurans)).